The primary structure comprises 612 residues: Zinc metalloproteinase-disintegrin-like berythractivase (612 aa).

The signal sequence occupies residues Met1–Ser20. Positions Ile21–Asn187 are excised as a propeptide. Positions Lys200 to Pro396 constitute a Peptidase M12B domain. Glu203 serves as a coordination point for Ca(2+). The N-linked (GlcNAc...) asparagine glycan is linked to Asn260. Asp287 serves as a coordination point for Ca(2+). Disulfide bonds link Cys311–Cys391, Cys351–Cys375, and Cys353–Cys358. His336 contributes to the Zn(2+) binding site. Glu337 is an active-site residue. The Zn(2+) site is built by His340 and His346. Asn348 carries an N-linked (GlcNAc...) asparagine glycan. An N-linked (GlcNAc...) asparagine glycan is attached at Asn374. Positions 391, 394, 406, 409, 411, 413, 416, and 419 each coordinate Ca(2+). Residues Pro404–Asn490 form the Disintegrin domain. 14 cysteine pairs are disulfide-bonded: Cys407–Cys436, Cys418–Cys431, Cys420–Cys426, Cys430–Cys453, Cys444–Cys450, Cys449–Cys475, Cys462–Cys482, Cys469–Cys501, Cys494–Cys506, Cys513–Cys563, Cys528–Cys574, Cys541–Cys551, Cys558–Cys600, and Cys594–Cys605. Asn432 carries N-linked (GlcNAc...) asparagine glycosylation. The D/ECD-tripeptide motif lies at Asp468–Asp470. Ca(2+) contacts are provided by Asp470, Leu471, Glu473, and Asp485.

The protein belongs to the venom metalloproteinase (M12B) family. P-III subfamily. P-IIIa sub-subfamily. As to quaternary structure, monomer. It depends on Zn(2+) as a cofactor. Post-translationally, highly glycosylated. In terms of tissue distribution, expressed by the venom gland.

The protein localises to the secreted. With respect to regulation, inhibited by EDTA and o-phenanthroline. Not inhibited by PMSF, benzamidine, irreversible serine-proteinase inhibitors and cysteine proteinase inhibitor E-64. Potent activator of prothrombin (F2). Does not elicit any hemorrhagic response. Barely inhibits collagen-induced platelet aggregation. Binds neither collagen, nor the jararhagin monoclonal antibody MAJar3. Hydrolyzes the Aalpha-chain of fibrin and fibrinogen, without affecting the Bbeta- and gamma-chains. Is capable of triggering endothelial pro-inflammatory and procoagulant cell responses, but fails to trigger apoptosis. Induces von Willebrand factor release, and the expression of both ICAM1 and E-selectin (SELE) (without increase in VCAM1) in endothelial cells (HUVEC). Is also able to up-regulate the synthesis of the coagulation factor TF (F3). Enhances nitric oxide (NO) generation, prostacyclin production and interleukin-8 release. This Bothrops erythromelas (Caatinga lance head) protein is Zinc metalloproteinase-disintegrin-like berythractivase.